Consider the following 209-residue polypeptide: Ribonuclease HII (209 aa).

In terms of domain architecture, RNase H type-2 spans 18 to 209; it reads SLVAGVDEVG…FKPVKALLER (192 aa). Residues Asp-24, Glu-25, and Asp-116 each coordinate a divalent metal cation.

This sequence belongs to the RNase HII family. Mn(2+) is required as a cofactor. It depends on Mg(2+) as a cofactor.

It localises to the cytoplasm. The catalysed reaction is Endonucleolytic cleavage to 5'-phosphomonoester.. Functionally, endonuclease that specifically degrades the RNA of RNA-DNA hybrids. This chain is Ribonuclease HII, found in Shewanella oneidensis (strain ATCC 700550 / JCM 31522 / CIP 106686 / LMG 19005 / NCIMB 14063 / MR-1).